A 143-amino-acid polypeptide reads, in one-letter code: uncharacterized protein (143 aa).

Residue Cys-12 is part of the active site.

Belongs to the ArsC family.

This is an uncharacterized protein from Rhodospirillum rubrum.